The following is a 445-amino-acid chain: MSQRKFFGTDGIRGKVGADQMTPELALKLGWAAGRVLARTGTKKVIIGKDTRISGYMFESALEAGFSSAGLNVLLMGPMPTPAVAYLTRTFRAEAGVVISASHNPYYDNGIKFFSNDGSKLDDEIELAIEAELEKPLICAESQFLGKVSRIDDARGRYIEYCKGNFPADQTLSGLKIVVDCAHGATYHIAPAVFRELGAEVVAIGVEPNGMNINDKCGATSMGAIRDKVLEVNADLGIALDGDGDRIMMVTQEGDIIDGDQILYILALDAKERGLLKGGVVGTQMANLGLELALKDEGIPFARSKVGDRYVMELLKELGWRIGGENSGHILNLDHGTTGDGIVAGILVLAAMRRSGKGLQQLIAKLKMFPQVLVNVRFEGDKNPLEADTVTAKVAEVERELGERGRVLLRKSGTEPLLRVMVEGEDKETVTRLANAIADAVKAAT.

The active-site Phosphoserine intermediate is the S102. The Mg(2+) site is built by S102, D241, D243, and D245. A Phosphoserine modification is found at S102.

This sequence belongs to the phosphohexose mutase family. The cofactor is Mg(2+). Activated by phosphorylation.

It carries out the reaction alpha-D-glucosamine 1-phosphate = D-glucosamine 6-phosphate. Functionally, catalyzes the conversion of glucosamine-6-phosphate to glucosamine-1-phosphate. The chain is Phosphoglucosamine mutase 1 from Shewanella amazonensis (strain ATCC BAA-1098 / SB2B).